The primary structure comprises 419 residues: Probable 3-isopropylmalate dehydratase large subunit (419 aa).

Residues Cys299, Cys359, and Cys362 each contribute to the [4Fe-4S] cluster site.

The protein belongs to the aconitase/IPM isomerase family. LeuC type 2 subfamily. As to quaternary structure, heterodimer of LeuC and LeuD. It depends on [4Fe-4S] cluster as a cofactor.

The catalysed reaction is (2R,3S)-3-isopropylmalate = (2S)-2-isopropylmalate. It participates in amino-acid biosynthesis; L-leucine biosynthesis; L-leucine from 3-methyl-2-oxobutanoate: step 2/4. Functionally, catalyzes the isomerization between 2-isopropylmalate and 3-isopropylmalate, via the formation of 2-isopropylmaleate. The chain is Probable 3-isopropylmalate dehydratase large subunit from Methanothermobacter thermautotrophicus (strain ATCC 29096 / DSM 1053 / JCM 10044 / NBRC 100330 / Delta H) (Methanobacterium thermoautotrophicum).